The primary structure comprises 277 residues: Large ribosomal subunit protein uL2 (277 aa).

The disordered stretch occupies residues 222–258 (GSVMNPCDHPHGGGEGRSPIGRPSPVTPWGKPALGYK).

This sequence belongs to the universal ribosomal protein uL2 family. In terms of assembly, part of the 50S ribosomal subunit. Forms a bridge to the 30S subunit in the 70S ribosome.

Functionally, one of the primary rRNA binding proteins. Required for association of the 30S and 50S subunits to form the 70S ribosome, for tRNA binding and peptide bond formation. It has been suggested to have peptidyltransferase activity; this is somewhat controversial. Makes several contacts with the 16S rRNA in the 70S ribosome. The protein is Large ribosomal subunit protein uL2 of Clostridium perfringens (strain 13 / Type A).